Here is a 456-residue protein sequence, read N- to C-terminus: MVNFASEVDKNNAFDSAHPSRKCKGSLDCNDPDPIFRHKVLVIIHKLAISSWNRIPLTLCNKLHIKRISGALTNAVYYVAPPEGYHAPKLLLRIYGPHVELFINRQVELENLKRLARHNIGPYLIGEFSNGRFEQYMESTTLTCKTIRDPKLSIYVGRRLCELHNFILLHPHEVLEMPAAWKNCLVWLPKAKAKILGRKHSLAITSEFMKTLEEDFNAYYNWFVEWSRDKKDWFGLKMVFSHNDTQYGNLLKIKAKKRSIPLSQKHRTLVPVDFEYAGPNLCAFDLANYFAEWMADYHHPTHNYLMDRSRYPDFNARKLVYHAYVEQSAVINDLLEIEDASLLKTDISDELKNTFEKQIMNLEESVRAISPAANIGWALWGILQCLEEDDEWEDLSVSSQVADRPEKQLVEGSTVPPIGTSSFDYIGYSSEKFDLFYEGCAALGLNGRNRSTFSYA.

The protein belongs to the choline/ethanolamine kinase family. In terms of assembly, monomer. The cofactor is Mg(2+).

The protein resides in the cytoplasm. Its subcellular location is the nucleus. It catalyses the reaction choline + ATP = phosphocholine + ADP + H(+). It functions in the pathway phospholipid metabolism; phosphatidylcholine biosynthesis; phosphocholine from choline: step 1/1. In terms of biological role, catalyzes the committed step in the synthesis of phosphatidylcholine by the CDP-choline pathway. The protein is Choline kinase of Schizosaccharomyces pombe (strain 972 / ATCC 24843) (Fission yeast).